Consider the following 131-residue polypeptide: uncharacterized protein (131 aa).

The region spanning 8–124 is the Response regulatory domain; the sequence is DILVVDDDPD…ELIRLVQQYC (117 aa). Residue Asp57 is modified to 4-aspartylphosphate.

This is an uncharacterized protein from Leptolyngbya boryana (Plectonema boryanum).